The following is a 368-amino-acid chain: Chaperone protein DnaJ (368 aa).

The 66-residue stretch at 5 to 70 folds into the J domain; it reads DYYEVLGVSK…EKRSMYDRMG (66 aa). Residues 132–210 form a CR-type zinc finger; that stretch reads GVKKTITFTA…CHGSGVADRQ (79 aa). Zn(2+)-binding residues include Cys145, Cys148, Cys162, Cys165, Cys184, Cys187, Cys198, and Cys201. CXXCXGXG motif repeat units follow at residues 145 to 152, 162 to 169, 184 to 191, and 198 to 205; these read CEVCDGKG, CRTCHGTG, CGTCRGQG, and CQSCHGSG. The interval 349–368 is disordered; the sequence is DGDEHSSSPKKKSFFDRLFD. A compositionally biased stretch (basic and acidic residues) spans 350 to 368; that stretch reads GDEHSSSPKKKSFFDRLFD.

This sequence belongs to the DnaJ family. Homodimer. Zn(2+) is required as a cofactor.

Its subcellular location is the cytoplasm. Functionally, participates actively in the response to hyperosmotic and heat shock by preventing the aggregation of stress-denatured proteins and by disaggregating proteins, also in an autonomous, DnaK-independent fashion. Unfolded proteins bind initially to DnaJ; upon interaction with the DnaJ-bound protein, DnaK hydrolyzes its bound ATP, resulting in the formation of a stable complex. GrpE releases ADP from DnaK; ATP binding to DnaK triggers the release of the substrate protein, thus completing the reaction cycle. Several rounds of ATP-dependent interactions between DnaJ, DnaK and GrpE are required for fully efficient folding. Also involved, together with DnaK and GrpE, in the DNA replication of plasmids through activation of initiation proteins. The polypeptide is Chaperone protein DnaJ (Acinetobacter baylyi (strain ATCC 33305 / BD413 / ADP1)).